Consider the following 39-residue polypeptide: Potassium channel toxin alpha-KTx 2.8 (39 aa).

Disulfide bonds link cysteine 7-cysteine 29, cysteine 13-cysteine 34, and cysteine 17-cysteine 36.

It belongs to the short scorpion toxin superfamily. Potassium channel inhibitor family. Alpha-KTx 02 subfamily. In terms of tissue distribution, expressed by the venom gland.

It localises to the secreted. Blocks Kv1.3/KCNA3 voltage-gated potassium channels of human T-lymphocytes (Kd=0.71 nM). The protein is Potassium channel toxin alpha-KTx 2.8 of Centruroides elegans (Bark scorpion).